Reading from the N-terminus, the 389-residue chain is Trans-2-enoyl-CoA reductase [NADH] (389 aa).

Residues 47 to 52, 73 to 74, 110 to 111, and 138 to 139 contribute to the NAD(+) site; these read GASTGY, FE, DA, and LA. Residue Tyr224 participates in substrate binding. The active-site Proton donor is Tyr234. Residues Lys243 and 272-274 contribute to the NAD(+) site; that span reads LVT.

The protein belongs to the TER reductase family. Monomer.

The enzyme catalyses a 2,3-saturated acyl-CoA + NAD(+) = a (2E)-enoyl-CoA + NADH + H(+). It participates in lipid metabolism; fatty acid biosynthesis. Its function is as follows. Involved in the fatty acid synthesis (FAS II). Catalyzes the reduction of a carbon-carbon double bond in an enoyl moiety that is covalently linked to a coenzyme A (CoA). This chain is Trans-2-enoyl-CoA reductase [NADH], found in Clostridium perfringens (strain ATCC 13124 / DSM 756 / JCM 1290 / NCIMB 6125 / NCTC 8237 / Type A).